We begin with the raw amino-acid sequence, 375 residues long: Alanine racemase (375 aa).

Lysine 38 acts as the Proton acceptor; specific for D-alanine in catalysis. Lysine 38 carries the N6-(pyridoxal phosphate)lysine modification. Residue arginine 137 participates in substrate binding. The Proton acceptor; specific for L-alanine role is filled by tyrosine 266. Methionine 314 serves as a coordination point for substrate.

The protein belongs to the alanine racemase family. Pyridoxal 5'-phosphate serves as cofactor.

It carries out the reaction L-alanine = D-alanine. It participates in amino-acid biosynthesis; D-alanine biosynthesis; D-alanine from L-alanine: step 1/1. Functionally, catalyzes the interconversion of L-alanine and D-alanine. May also act on other amino acids. The protein is Alanine racemase (alr) of Cutibacterium acnes (strain DSM 16379 / KPA171202) (Propionibacterium acnes).